A 1193-amino-acid chain; its full sequence is Falcilysin (1193 aa).

Zn(2+) is bound at residue His-129. The Proton acceptor role is filled by Glu-132. 2 residues coordinate Zn(2+): His-133 and Glu-243. The tract at residues 376-404 (DKTNNHNNNHSNNQSSENNGYSNGSHSSD) is disordered. Over residues 380-394 (NHNNNHSNNQSSENN) the composition is skewed to low complexity. The segment covering 395-404 (GYSNGSHSSD) has biased composition (polar residues). A coiled-coil region spans residues 583-619 (LLEGDENYAQEQENLEKQELKKRIENFNEQEKEQVIK).

It belongs to the peptidase M16 family. As to quaternary structure, monomer. Component of the hemozoin formation complex (HFC) composed of falcipains FP2A and/or FP2B, plasmepsins PMII, PMIII/HAP and PMIV, heme detoxifying protein HDP and falcilysin FLN. The HFC complex is involved in hemoglobin degradation and detoxification of heme in the food vacuole during the asexual blood stage. Requires Zn(2+) as cofactor. In terms of processing, does not require processing for targeting to the food vacuole or maturation.

The protein resides in the vacuole membrane. It is found in the plastid. It localises to the apicoplast. The protein localises to the vesicle. In terms of biological role, in the food vacuole, acts downstream of proteases plasmepsins PMI and PMII and falcipains during the catabolism of host hemoglobin by cleaving peptide fragments of alpha and beta hemoglobin subunits generated by PMI and PMII and falcipains. In the apicoplast, degrades apicoplast transit peptides after their cleavage. Prefers bulky hydrophobic amino acids in the P1' position at both acidic and neutral pH. At P2', prefers hydrophobic residues at acidic pH; at neutral pH, these same residues are abundant but prefers Arg. At P3', prefers hydrophobic residues, especially Met, at both pH conditions. At P4' and P5', prefers acidic residues at acidic pH, however, at neutral pH, the enzyme is less selective at these positions. The optimal site cleavage at acidic pH is YNEHS-|-FFMEE and, at neutral pH, MKRHS-|-FRMRG. This Plasmodium falciparum (isolate 3D7) protein is Falcilysin.